Consider the following 101-residue polypeptide: MATNHLVLSGTITRSRSFKSPAGIAHSVIMLEHKSQCFEAEMLRNVYCQMQVIFSGERFESVTEQLKSGVDIEVQGFIALQQSRNGQNRLVLHAENVELKT.

One can recognise an SSB domain in the interval 1 to 101 (MATNHLVLSG…LHAENVELKT (101 aa)).

It belongs to the PriB family. Homodimer. Interacts with PriA and DnaT. Component of the replication restart primosome. Primosome assembly occurs via a 'hand-off' mechanism. PriA binds to replication forks, subsequently PriB then DnaT bind; DnaT then displaces ssDNA to generate the helicase loading substrate.

Functionally, involved in the restart of stalled replication forks, which reloads the replicative helicase on sites other than the origin of replication; the PriA-PriB pathway is the major replication restart pathway. During primosome assembly it facilitates complex formation between PriA and DnaT on DNA; stabilizes PriA on DNA. Stimulates the DNA unwinding activity of PriA helicase. The chain is Replication restart protein PriB from Shewanella sediminis (strain HAW-EB3).